We begin with the raw amino-acid sequence, 335 residues long: Ketol-acid reductoisomerase (NADP(+)) 2 (335 aa).

The KARI N-terminal Rossmann domain maps to 1–180 (MKTYYEKDAN…GCTRAGVIET (180 aa)). NADP(+) is bound by residues 24 to 27 (YGSQ), R47, S51, and 81 to 84 (DEQQ). H106 is an active-site residue. G132 lines the NADP(+) pocket. Positions 181–326 (TFQEETETDL…AELREMMSWI (146 aa)) constitute a KARI C-terminal knotted domain. D189, E193, E225, and E229 together coordinate Mg(2+). Residue S250 coordinates substrate.

The protein belongs to the ketol-acid reductoisomerase family. It depends on Mg(2+) as a cofactor.

It carries out the reaction (2R)-2,3-dihydroxy-3-methylbutanoate + NADP(+) = (2S)-2-acetolactate + NADPH + H(+). It catalyses the reaction (2R,3R)-2,3-dihydroxy-3-methylpentanoate + NADP(+) = (S)-2-ethyl-2-hydroxy-3-oxobutanoate + NADPH + H(+). It participates in amino-acid biosynthesis; L-isoleucine biosynthesis; L-isoleucine from 2-oxobutanoate: step 2/4. Its pathway is amino-acid biosynthesis; L-valine biosynthesis; L-valine from pyruvate: step 2/4. Involved in the biosynthesis of branched-chain amino acids (BCAA). Catalyzes an alkyl-migration followed by a ketol-acid reduction of (S)-2-acetolactate (S2AL) to yield (R)-2,3-dihydroxy-isovalerate. In the isomerase reaction, S2AL is rearranged via a Mg-dependent methyl migration to produce 3-hydroxy-3-methyl-2-ketobutyrate (HMKB). In the reductase reaction, this 2-ketoacid undergoes a metal-dependent reduction by NADPH to yield (R)-2,3-dihydroxy-isovalerate. This chain is Ketol-acid reductoisomerase (NADP(+)) 2, found in Bacillus cereus (strain ATCC 10987 / NRS 248).